Here is a 468-residue protein sequence, read N- to C-terminus: BTB/POZ domain-containing protein 17 (468 aa).

The N-terminal stretch at 1-16 (MRRFCVVPLLLVLVEA) is a signal peptide. A BTB domain is found at 51-120 (TDTILRIRTA…FYCGEISVNL (70 aa)). The BACK domain occupies 159–259 (VVSWYHYALR…ISPSQLFQIQ (101 aa)).

It is found in the secreted. In Xenopus tropicalis (Western clawed frog), this protein is BTB/POZ domain-containing protein 17 (btbd17).